A 430-amino-acid chain; its full sequence is Probable acetate kinase (430 aa).

Position 12 (asparagine 12) interacts with Mg(2+). Lysine 19 provides a ligand contact to ATP. Position 100 (arginine 100) interacts with substrate. The active-site Proton donor/acceptor is the aspartate 159. 220–224 is an ATP binding site; that stretch reads HLGSG. Glutamate 416 serves as a coordination point for Mg(2+).

This sequence belongs to the acetokinase family. Mg(2+) serves as cofactor.

It catalyses the reaction acetate + ATP = acetyl phosphate + ADP. Its pathway is metabolic intermediate biosynthesis; acetyl-CoA biosynthesis; acetyl-CoA from acetate: step 1/2. This chain is Probable acetate kinase, found in Cryptococcus neoformans var. neoformans serotype D (strain B-3501A) (Filobasidiella neoformans).